We begin with the raw amino-acid sequence, 201 residues long: MSPDLLGAVLVAAGYLAGSIPFGVVLGRLVLGVDVRTVGSGNIGATNVARAGGKKMGVLVLVLDAAKAIVPILLARRLLAGAPHAEAWSTAVAVAAFVGHLFPVWLGFKGGKGVATGLGIFAVLAPWAALAGLVGYAVAYGLTRISSVGSLTGTALCAAGGFATYGVRHPVPWAGLAIALLIFLRHRENIRRLVRGEEKKV.

Transmembrane regions (helical) follow at residues 5–25, 55–75, 88–108, 118–138, and 164–184; these read LLGA…FGVV, KMGV…ILLA, WSTA…WLGF, LGIF…GYAV, and TYGV…LIFL.

It belongs to the PlsY family. Probably interacts with PlsX.

It localises to the cell inner membrane. It catalyses the reaction an acyl phosphate + sn-glycerol 3-phosphate = a 1-acyl-sn-glycero-3-phosphate + phosphate. Its pathway is lipid metabolism; phospholipid metabolism. In terms of biological role, catalyzes the transfer of an acyl group from acyl-phosphate (acyl-PO(4)) to glycerol-3-phosphate (G3P) to form lysophosphatidic acid (LPA). This enzyme utilizes acyl-phosphate as fatty acyl donor, but not acyl-CoA or acyl-ACP. This is Glycerol-3-phosphate acyltransferase from Anaeromyxobacter dehalogenans (strain 2CP-C).